Reading from the N-terminus, the 957-residue chain is Protein CRT10 (957 aa).

The segment at 695-719 (NSTEEDDVNSDPENEESGSSLTSFQ) is disordered. The segment covering 697 to 710 (TEEDDVNSDPENEE) has biased composition (acidic residues). Residue serine 704 is modified to Phosphoserine.

In terms of assembly, component of a cullin-RING ligase (CRL) composed of 4 subunits: the RING protein HRT1, the cullin RTT101, a linker protein MMS1, and the substrate receptor CRT10. Interacts with MMS1.

In terms of biological role, substrate targeting component of a cullin-RING-based E3 ubiquitin-protein ligase complex RTT101(MMS1-CRT10). RTT101(MMS1-CRT10) may regulate nucleotide synthesis through transcriptional regulation of RNR genes encoding ribonucleotide reductases. In Saccharomyces cerevisiae (strain ATCC 204508 / S288c) (Baker's yeast), this protein is Protein CRT10 (CRT10).